We begin with the raw amino-acid sequence, 327 residues long: Embigin (327 aa).

A signal peptide spans 1–32 (MRALPGLLEARARTPRLLLLQCLLAAARPSSA). Topologically, residues 33–260 (DGSAPDSPFT…ELVVLSYLVP (228 aa)) are extracellular. 9 N-linked (GlcNAc...) asparagine glycosylation sites follow: Asn-54, Asn-61, Asn-75, Asn-85, Asn-100, Asn-189, Asn-196, Asn-213, and Asn-218. 2 Ig-like V-type domains span residues 71 to 158 (PVEK…NFKV) and 159 to 253 (PELH…IELV). 2 disulfide bridges follow: Cys-88–Cys-142 and Cys-180–Cys-237. Residues 261–281 (LKPFLVIVAEVILLVATILLC) traverse the membrane as a helical segment. The Cytoplasmic segment spans residues 282–327 (EKYTQKKKKHSDEGKEFEQIEQLKSDDSNGIENNVPRHRKNESLGQ). The segment at 287–327 (KKKKHSDEGKEFEQIEQLKSDDSNGIENNVPRHRKNESLGQ) is disordered. The segment covering 291–308 (HSDEGKEFEQIEQLKSDD) has biased composition (basic and acidic residues). At Ser-309 the chain carries Phosphoserine.

In terms of assembly, interacts with SLC16A1, SLC16A6 and SLC16A7.

The protein resides in the cell membrane. Its subcellular location is the synapse. Functionally, plays a role in the outgrowth of motoneurons and in the formation of neuromuscular junctions. Following muscle denervation, promotes nerve terminal sprouting and the formation of additional acetylcholine receptor clusters at synaptic sites without affecting terminal Schwann cell number or morphology. Delays the retraction of terminal sprouts following re-innervation of denervated endplates. May play a role in targeting the monocarboxylate transporters SLC16A1, SLC16A6 and SLC16A7 to the cell membrane. In Homo sapiens (Human), this protein is Embigin (EMB).